The sequence spans 264 residues: Major prion protein (264 aa).

The N-terminal stretch at 1-24 (MVKSHIGSWILVLFVAMWSDVGLC) is a signal peptide. Residues 25-41 (KKRPKPGGGWNTGGSRY) are interaction with ADGRG6. The tract at residues 25–241 (KKRPKPGGGW…ESQAYYQRGA (217 aa)) is interaction with GRB2, ERI3 and SYN1. The tract at residues 28-119 (PKPGGGWNTG…WNKPSKPKTN (92 aa)) is disordered. A run of 6 repeats spans residues 54–62 (PQGGGGWGQ), 63–70 (PHGGGWGQ), 71–78 (PHGGGWGQ), 79–86 (PHGGGWGQ), 87–94 (PHGGGWGQ), and 95–103 (PHGGGGWGQ). The tract at residues 54–103 (PQGGGGWGQPHGGGWGQPHGGGWGQPHGGGWGQPHGGGWGQPHGGGGWGQ) is 6 X 8 AA tandem repeats of P-H-G-G-G-W-G-Q. The span at 55 to 107 (QGGGGWGQPHGGGWGQPHGGGWGQPHGGGWGQPHGGGWGQPHGGGGWGQGGTH) shows a compositional bias: gly residues. The Cu(2+) site is built by H72, G73, G74, H80, G81, G82, H88, G89, G90, H96, G98, and G99. C190 and C225 are oxidised to a cystine. Residues N192 and N208 are each glycosylated (N-linked (GlcNAc...) asparagine). A lipid anchor (GPI-anchor amidated alanine) is attached at A241. The propeptide at 242 to 264 (SVILFSSPPVILLISFLIFLIVG) is removed in mature form.

This sequence belongs to the prion family. Monomer and homodimer. Has a tendency to aggregate into amyloid fibrils containing a cross-beta spine, formed by a steric zipper of superposed beta-strands. Soluble oligomers may represent an intermediate stage on the path to fibril formation. Copper binding may promote oligomerization. Interacts with GRB2, APP, ERI3/PRNPIP and SYN1. Mislocalized cytosolically exposed PrP interacts with MGRN1; this interaction alters MGRN1 subcellular location and causes lysosomal enlargement. Interacts with APP. Interacts with KIAA1191. Interacts with ADGRG6.

It is found in the cell membrane. Its subcellular location is the golgi apparatus. In terms of biological role, its primary physiological function is unclear. May play a role in neuronal development and synaptic plasticity. May be required for neuronal myelin sheath maintenance. May promote myelin homeostasis through acting as an agonist for ADGRG6 receptor. May play a role in iron uptake and iron homeostasis. Soluble oligomers are toxic to cultured neuroblastoma cells and induce apoptosis (in vitro). Association with GPC1 (via its heparan sulfate chains) targets PRNP to lipid rafts. Also provides Cu(2+) or Zn(2+) for the ascorbate-mediated GPC1 deaminase degradation of its heparan sulfate side chains. The polypeptide is Major prion protein (PRNP) (Bos indicus x Bos taurus (Hybrid cattle)).